The sequence spans 890 residues: Phosphatidate phosphatase LPIN1 (890 aa).

The N-LIP stretch occupies residues M1–I108. Residues S106 and S150 each carry the phosphoserine modification. Disordered stretches follow at residues V125–P183, S228–K300, K365–L392, and S421–D456. Positions V152–K161 are enriched in basic residues. Residues K153 to R158 carry the Nuclear localization signal motif. Composition is skewed to basic and acidic residues over residues S162 to N172 and S252 to G265. A phosphoserine mark is found at S252, S254, and S260. T264 carries the post-translational modification Phosphothreonine. Phosphoserine is present on S294. At K425 the chain carries N6-acetyllysine. A compositionally biased stretch (polar residues) spans G431–Q440. A phosphoserine mark is found at S434, S438, and S449. Residues S441–D456 show a composition bias toward low complexity. K565 is covalently cross-linked (Glycyl lysine isopeptide (Lys-Gly) (interchain with G-Cter in SUMO)). Residues E566 to L616 are disordered. Residues T581–L590 are compositionally biased toward polar residues. A compositionally biased stretch (basic and acidic residues) spans V594 to A607. K595 carries the N6-acetyllysine modification. K595 participates in a covalent cross-link: Glycyl lysine isopeptide (Lys-Gly) (interchain with G-Cter in SUMO). Phosphoserine occurs at positions 600 and 601. The C-LIP stretch occupies residues Y624–E830. Positions D678–T682 match the DXDXT motif motif. The short motif at L689–L693 is the LXXIL motif element. 2 positions are modified to phosphoserine: S887 and S889.

Belongs to the lipin family. Interacts (via LXXIL motif) with PPARA. Interacts with PPARGC1A. Interaction with PPARA and PPARGC1A leads to the formation of a complex that modulates gene transcription. Interacts with MEF2C. Requires Mg(2+) as cofactor. It depends on Mn(2+) as a cofactor. Post-translationally, phosphorylated at multiple sites by mTOR in response to insulin, leading to its inactivation. Phosphorylation does not affect the catalytic activity but regulates the localization. Phosphorylation is decreased by epinephrine. Dephosphorylated by the CTDNEP1-CNEP1R1 complex. Dephosphorylation following mTOR inhibition promotes its activity. In terms of processing, acetylation at Lys-425 and Lys-595 by KAT5 in response to fatty acids promotes translocation to the endoplasmic reticulum and synthesis of diacylglycerol. Sumoylated. Specifically expressed in skeletal muscle. Also abundant in adipose tissue. Lower levels in some portions of the digestive tract.

It is found in the cytoplasm. The protein localises to the cytosol. Its subcellular location is the endoplasmic reticulum membrane. The protein resides in the nucleus membrane. It carries out the reaction a 1,2-diacyl-sn-glycero-3-phosphate + H2O = a 1,2-diacyl-sn-glycerol + phosphate. The enzyme catalyses 1-octadecanoyl-2-(4Z,7Z,10Z,13Z,16Z,19Z-docosahexaenoyl)-sn-glycero-3-phosphate + H2O = 1-octadecanoyl-2-(4Z,7Z,10Z,13Z,16Z,19Z-docosahexaenoyl)-sn-glycerol + phosphate. It catalyses the reaction 1-octadecanoyl-2-(5Z,8Z,11Z,14Z-eicosatetraenoyl)-sn-glycero-3-phosphate + H2O = 1-octadecanoyl-2-(5Z,8Z,11Z,14Z-eicosatetraenoyl)-sn-glycerol + phosphate. The catalysed reaction is 1-octadecanoyl-2-(9Z,12Z-octadecadienoyl)-sn-glycero-3-phosphate + H2O = 1-octadecanoyl-2-(9Z,12Z)-octadecadienoyl-sn-glycerol + phosphate. It carries out the reaction 1-octadecanoyl-2-(9Z-octadecenoyl)-sn-glycero-3-phosphate + H2O = 1-octadecanoyl-2-(9Z-octadecenoyl)-sn-glycerol + phosphate. The enzyme catalyses 1-hexadecanoyl-2-(4Z,7Z,10Z,13Z,16Z,19Z-docosahexaenoyl)-sn-glycero-3-phosphate + H2O = 1-hexadecanoyl-2-(4Z,7Z,10Z,13Z,16Z,19Z-docosahexaenoyl)-sn-glycerol + phosphate. It catalyses the reaction 1,2-dioctadecanoyl-sn-glycero-3-phosphate + H2O = 1,2-dioctadecanoyl-sn-glycerol + phosphate. The catalysed reaction is 1-hexadecanoyl-2-(5Z,8Z,11Z,14Z-eicosatetraenoyl)-sn-glycero-3-phosphate + H2O = 1-hexadecanoyl-2-(5Z,8Z,11Z,14Z-eicosatetraenoyl)-sn-glycerol + phosphate. It carries out the reaction 1-hexadecanoyl-2-(9Z,12Z-octadecadienoyl)-sn-glycero-3-phosphate + H2O = 1-hexadecanoyl-2-(9Z,12Z-octadecadienoyl)-sn-glycerol + phosphate. The enzyme catalyses 1-hexadecanoyl-2-(9Z-octadecenoyl)-sn-glycero-3-phosphate + H2O = 1-hexadecanoyl-2-(9Z-octadecenoyl)-sn-glycerol + phosphate. It catalyses the reaction 1,2-di-(4Z,7Z,10Z,13Z,16Z,19Z-docosahexaenoyl)-sn-glycero-3-phosphate + H2O = 1,2-di-(4Z,7Z,10Z,13Z,16Z,19Z-docosahexaenoyl)-sn-glycerol + phosphate. The catalysed reaction is 1,2-di-(5Z,8Z,11Z,14Z)-eicosatetraenoyl-sn-glycero-3-phosphate + H2O = 1,2-di-(5Z,8Z,11Z,14Z)-eicosatetraenoyl-sn-glycerol + phosphate. It carries out the reaction 1,2-di-(9Z,12Z-octadecadienoyl)-sn-glycero-3-phosphate + H2O = 1,2-di-(9Z,12Z-octadecadienoyl)-sn-glycerol + phosphate. The enzyme catalyses 1,2-di-(9Z-octadecenoyl)-sn-glycero-3-phosphate + H2O = 1,2-di-(9Z-octadecenoyl)-sn-glycerol + phosphate. It catalyses the reaction 1,2-dihexadecanoyl-sn-glycero-3-phosphate + H2O = 1,2-dihexadecanoyl-sn-glycerol + phosphate. Potently inhibited by sphingolipids, in particular, the sphingoid bases sphinganine and sphingosine and ceramide-1-phosphate. Inhibited by concentrations of Mg(2+) and Mn(2+) above their optimums and by Ca(2+), Zn(2+), N-ethylmaleimide and propranolol. With respect to regulation, sertraline and propanolol inhibit activity in dose-dependent manners with IC(50) values of 103 uM and 226 uM, respectively. Its activity is regulated as follows. Sertraline and propanolol inhibit activity in dose-dependent manners with IC(50) values of 108 uM and 271 uM, respectively. Sertraline and propanolol inhibit activity in dose-dependent manners with IC(50) values of 143 uM and 227 uM, respectively. Acts as a magnesium-dependent phosphatidate phosphatase enzyme which catalyzes the conversion of phosphatidic acid to diacylglycerol during triglyceride, phosphatidylcholine and phosphatidylethanolamine biosynthesis and therefore controls the metabolism of fatty acids at different levels. Is involved in adipocyte differentiation. Recruited at the mitochondrion outer membrane and is involved in mitochondrial fission by converting phosphatidic acid to diacylglycerol. Acts also as nuclear transcriptional coactivator for PPARGC1A/PPARA regulatory pathway to modulate lipid metabolism gene expression. The chain is Phosphatidate phosphatase LPIN1 from Homo sapiens (Human).